Reading from the N-terminus, the 596-residue chain is Protein kinase C iota type (596 aa).

The segment covering 1-12 (MPTQRDSSTMSH) has biased composition (polar residues). The segment at 1–21 (MPTQRDSSTMSHTVACGGGGD) is disordered. An N-acetylproline modification is found at Pro2. The interval 2–28 (PTQRDSSTMSHTVACGGGGDHSHQVRV) is required for interaction with RAB2. The regulatory domain stretch occupies residues 2 to 253 (PTQRDSSTMS…KASSSLGLQD (252 aa)). Thr3 carries the post-translational modification Phosphothreonine. 2 positions are modified to phosphoserine: Ser7 and Ser8. Thr9 carries the phosphothreonine modification. Residues 25–108 (QVRVKAYYRG…SELLIHVFPC (84 aa)) form the PB1 domain. Residues 72-91 (DEEGDPCTVSSQLELEEAFR) are interaction with PARD6A. Residues 125 to 134 (YRRGARRWRK) carry the Pseudosubstrate motif. The Phorbol-ester/DAG-type zinc finger occupies 140-190 (GHTFQAKRFNRRAHCAICTDRIWGLGRQGYKCINCKLLVHKKCHKLVTIEC). The Protein kinase domain maps to 254–522 (FDLLRVIGRG…FADIQGHPFF (269 aa)). 260–268 (IGRGSYAKV) lines the ATP pocket. Tyr265 and Tyr280 each carry phosphotyrosine; by SRC. Lys283 provides a ligand contact to ATP. Position 334 is a phosphotyrosine; by SRC (Tyr334). Residue Asp378 is the Proton acceptor of the active site. Position 412 is a phosphothreonine; by PDPK1 (Thr412). The 72-residue stretch at 523-594 (RNVDWDMMEQ…INPLLMSAEE (72 aa)) folds into the AGC-kinase C-terminal domain. A Phosphothreonine modification is found at Thr564.

The protein belongs to the protein kinase superfamily. AGC Ser/Thr protein kinase family. PKC subfamily. In terms of assembly, forms a complex with SQSTM1 and MP2K5. Interacts directly with SQSTM1. Interacts with IKBKB. Interacts with PARD6A, PARD6B and PARD6G. Part of a quaternary complex containing aPKC, PARD3, a PARD6 protein (PARD6A, PARD6B or PARD6G) and a GTPase protein (CDC42 or RAC1). Part of a complex with LLGL1 and PARD6B. Interacts with ADAP1/CENTA1. Interaction with SMG1, through the ZN-finger domain, activates the kinase activity. Interacts with CDK7. Forms a complex with RAB2A and GAPDH involved in recruitment onto the membrane of vesicular tubular clusters (VTCs). Interacts with ECT2 ('Thr-359' phosphorylated form). Interacts with VAMP2. Interacts with WDFY2 (via WD repeats 1-3). In terms of processing, phosphorylation at Thr-412 in the activation loop is not mandatory for activation. Upon neuronal growth factor (NGF) stimulation, phosphorylated by SRC at Tyr-265, Tyr-280 and Tyr-334. Phosphorylation at Tyr-265 facilitates binding to KPNB1/importin-beta regulating entry of PRKCI into the nucleus. Phosphorylation on Tyr-334 is important for NF-kappa-B stimulation. Phosphorylated at Thr-564 during the initial phase of long term potentiation. In terms of tissue distribution, expressed in dorsal hippocampus (at protein level).

The protein localises to the cytoplasm. The protein resides in the membrane. It is found in the endosome. It localises to the nucleus. It carries out the reaction L-seryl-[protein] + ATP = O-phospho-L-seryl-[protein] + ADP + H(+). The enzyme catalyses L-threonyl-[protein] + ATP = O-phospho-L-threonyl-[protein] + ADP + H(+). Its activity is regulated as follows. Atypical PKCs (PRKCI and PRKCZ) exhibit an elevated basal enzymatic activity (that may be due to the interaction with SMG1 or SQSTM1) and are not regulated by diacylglycerol, phosphatidylserine, phorbol esters or calcium ions. Two specific sites, Thr-412 (activation loop of the kinase domain) and Thr-564 (turn motif), need to be phosphorylated for its full activation. Might also be a target for novel lipid activators that are elevated during nutrient-stimulated insulin secretion. In terms of biological role, calcium- and diacylglycerol-independent serine/ threonine-protein kinase that plays a general protective role against apoptotic stimuli, is involved in NF-kappa-B activation, cell survival, differentiation and polarity, and contributes to the regulation of microtubule dynamics in the early secretory pathway. Is necessary for BCR-ABL oncogene-mediated resistance to apoptotic drug in leukemia cells, protecting leukemia cells against drug-induced apoptosis. In cultured neurons, prevents amyloid beta protein-induced apoptosis by interrupting cell death process at a very early step. In glioblastoma cells, may function downstream of phosphatidylinositol 3-kinase (PI3K) and PDPK1 in the promotion of cell survival by phosphorylating and inhibiting the pro-apoptotic factor BAD. Can form a protein complex in non-small cell lung cancer (NSCLC) cells with PARD6A and ECT2 and regulate ECT2 oncogenic activity by phosphorylation, which in turn promotes transformed growth and invasion. In response to nerve growth factor (NGF), acts downstream of SRC to phosphorylate and activate IRAK1, allowing the subsequent activation of NF-kappa-B and neuronal cell survival. Functions in the organization of the apical domain in epithelial cells by phosphorylating EZR. This step is crucial for activation and normal distribution of EZR at the early stages of intestinal epithelial cell differentiation. Forms a protein complex with LLGL1 and PARD6B independently of PARD3 to regulate epithelial cell polarity. Plays a role in microtubule dynamics in the early secretory pathway through interaction with RAB2A and GAPDH and recruitment to vesicular tubular clusters (VTCs). In human coronary artery endothelial cells (HCAEC), is activated by saturated fatty acids and mediates lipid-induced apoptosis. Downstream of PI3K is required for insulin-stimulated glucose transport. Activates RAB4A and promotes its association with KIF3A which is required for the insulin-induced SLC2A4/GLUT4 translocation in adipocytes. Is essential in early embryogenesis and development of differentiating photoreceptors by playing a role in the establishment of epithelial and neuronal polarity. Involved in early synaptic long term potentiation phase in CA1 hippocampal cells and short term memory formation. This Rattus norvegicus (Rat) protein is Protein kinase C iota type (Prkci).